A 118-amino-acid chain; its full sequence is Large ribosomal subunit protein bL19 (118 aa).

The protein belongs to the bacterial ribosomal protein bL19 family.

In terms of biological role, this protein is located at the 30S-50S ribosomal subunit interface and may play a role in the structure and function of the aminoacyl-tRNA binding site. This chain is Large ribosomal subunit protein bL19, found in Onion yellows phytoplasma (strain OY-M).